The primary structure comprises 656 residues: DNA ligase (656 aa).

NAD(+) is bound by residues 32 to 36 (DAIYD) and 81 to 82 (SL). The active-site N6-AMP-lysine intermediate is Lys112. NAD(+) is bound by residues Arg133, Glu167, and Lys306. Zn(2+) contacts are provided by Cys400, Cys403, Cys416, and Cys421. Residues 577–656 (KSSSVFNNKT…ELLKRLKELD (80 aa)) form the BRCT domain.

The protein belongs to the NAD-dependent DNA ligase family. LigA subfamily. Requires Mg(2+) as cofactor. It depends on Mn(2+) as a cofactor.

The enzyme catalyses NAD(+) + (deoxyribonucleotide)n-3'-hydroxyl + 5'-phospho-(deoxyribonucleotide)m = (deoxyribonucleotide)n+m + AMP + beta-nicotinamide D-nucleotide.. Functionally, DNA ligase that catalyzes the formation of phosphodiester linkages between 5'-phosphoryl and 3'-hydroxyl groups in double-stranded DNA using NAD as a coenzyme and as the energy source for the reaction. It is essential for DNA replication and repair of damaged DNA. This Helicobacter pylori (strain ATCC 700392 / 26695) (Campylobacter pylori) protein is DNA ligase.